A 137-amino-acid chain; its full sequence is uncharacterized protein (137 aa).

A run of 5 helical transmembrane segments spans residues 4-26 (AIILGLLVAVFYGVGTFFAKIVC), 35-57 (IVVNIVGIILCLIILLKYKNIII), 62-84 (ILTYAIISAVLVVIGSLLLYYAL), 89-111 (ASIVVPLSSIGPAITVALSILFL), and 116-135 (TLPQMIGIVLIIIGIILLSI). The 123-residue stretch at 13-135 (VFYGVGTFFA…IIIGIILLSI (123 aa)) folds into the EamA domain.

It is found in the cell membrane. This is an uncharacterized protein from Methanocaldococcus jannaschii (strain ATCC 43067 / DSM 2661 / JAL-1 / JCM 10045 / NBRC 100440) (Methanococcus jannaschii).